The chain runs to 488 residues: MKNSVQLITYVDRLSGGGFPELRALLDGRLQGLFGGVHALPFFNPIDGADAGFDPTDHTIVDPRLGSWDDVRALAGSVEIMADLIVNHVSAQSSWFQDFIAKGSDSEFADMFMTFGKAFPRGASEQDLLNIYRPRLGCRFQRPRLQIGSQRMLWTTFTPQQIDIDVHSAHGALYLETILDRFAEANVTAIRLDAAGYAIKKAGTSCFMIDETYAFLAKLAEKARDRGMEVLVEIHSYYRDQIEIASKVDRVYDFALPPLILHSLFTGDATALARWLEISPHNAITVLDTHDGIGVIDVGAHSDGRPGLLEPQAIDHLVEEIHRRSEGQSRLATGAAASNLDLYQVNCTYYDALGRNDDDYLIARAIQFFAPGIPQVYYVGLLGGINDMELLGKTGVGRDINRHFYEDREIDLALESPLVKRLSDLIRFRNTHPAFNGSFEVATDDTGSLVLSWNLNTEFAQLVVSFSQGKATITASGCYDFTFSGAIA.

Sucrose-binding positions include Asp50, His88, Arg191 to Asp193, Glu233, His290 to Asp291, Asp341 to Gln344, and Arg398. Asp193 acts as the Nucleophile in catalysis. Catalysis depends on Glu233, which acts as the Proton donor.

This sequence belongs to the glycosyl hydrolase 13 family. Sucrose phosphorylase subfamily.

The catalysed reaction is sucrose + phosphate = D-fructose + alpha-D-glucose 1-phosphate. This Agrobacterium vitis (Rhizobium vitis) protein is Sucrose phosphorylase.